The sequence spans 61 residues: Putative antitoxin APE_0472b.1 (61 aa).

This sequence belongs to the UPF0165 family.

Its function is as follows. Possibly the antitoxin component of a type II toxin-antitoxin (TA) system. The polypeptide is Putative antitoxin APE_0472b.1 (Aeropyrum pernix (strain ATCC 700893 / DSM 11879 / JCM 9820 / NBRC 100138 / K1)).